The chain runs to 411 residues: Basic leucine zipper 10 (411 aa).

4 disordered regions span residues 1 to 36 (MNSIFSIDDFSDPFWETPPIPLNPDSSKPVTADEVS), 76 to 99 (SLPSVSGQNDFEDDSRFRDRDSGN), 140 to 251 (SVKP…NDLK), and 362 to 411 (NNFA…KCVD). A compositionally biased stretch (polar residues) spans 24–36 (PDSSKPVTADEVS). The span at 89 to 98 (DSRFRDRDSG) shows a compositional bias: basic and acidic residues. 2 stretches are compositionally biased toward polar residues: residues 146–173 (STSSPETQLQPVQSSPLTQGELGVTSSL) and 183–193 (SMKQVTSGSSR). Serine 196 is modified (phosphoserine). Positions 196–206 (SDDEDLDEENE) are enriched in acidic residues. One can recognise a bZIP domain in the interval 215–278 (DVKKSRRMLS…DEAAVGNRIL (64 aa)). A basic motif region spans residues 217 to 236 (KKSRRMLSNRESARRSRRRK). The short motif at 219–226 (SRRMLSNR) is the Nuclear localization signal element. Residues 243–257 (LETQVNDLKGEHSSL) are leucine-zipper. A compositionally biased stretch (polar residues) spans 368–390 (PSQTSSPLQRIRNGQNHHVTPSA).

The protein belongs to the bZIP family. Forms a heterodimer with BZIP1, BZIP2, BZIP9, BZIP11, BZIP44, BZIP53 and BZIP63. Interacts with ABI3 and forms a complex made of ABI3, BZIP53 and BZIP10. Binding with LSD1 leads to cytoplasmic retention. In terms of tissue distribution, expressed in roots, shoots, stems, young leaves, trichomes, hydathodes, siliques, seeds, and flowers, mostly in vascular tissues.

Its subcellular location is the nucleus. It is found in the cytoplasm. Transcription factor that binds to the C-box-like motif (5'-TGCTGACGTCA-3') and G-box-like motif (5'-CCACGTGGCC-3'), ABRE elements, of gene promoters. Binds to the 5'-ACGT-3' motif of seed storage protein (SSP) encoding gene promoters (e.g. At2S and CRU3) and promotes their expression in seeds when in complex with ABI3 and BZIP53. Involved in the defense responses to the biotrophic pathogen Hyaloperonospora parasitica and oxidative stress responses; mediates positively cell death. Promotes BZIP53-mediated response to hypoosmolarity stress that leads to POX1/PRODH1 accumulation. In Arabidopsis thaliana (Mouse-ear cress), this protein is Basic leucine zipper 10 (BZIP10).